A 390-amino-acid chain; its full sequence is Putative 2-isopropylmalate synthase (390 aa).

Positions 5-267 (IIIFDTTLRD…KTNIKYQEIY (263 aa)) constitute a Pyruvate carboxyltransferase domain. Positions 14, 202, 204, and 238 each coordinate Mn(2+).

Belongs to the alpha-IPM synthase/homocitrate synthase family. LeuA type 1 subfamily. In terms of assembly, homodimer. Mn(2+) serves as cofactor.

It localises to the cytoplasm. It carries out the reaction 3-methyl-2-oxobutanoate + acetyl-CoA + H2O = (2S)-2-isopropylmalate + CoA + H(+). It participates in amino-acid biosynthesis; L-leucine biosynthesis; L-leucine from 3-methyl-2-oxobutanoate: step 1/4. In terms of biological role, catalyzes the condensation of the acetyl group of acetyl-CoA with 3-methyl-2-oxobutanoate (2-ketoisovalerate) to form 3-carboxy-3-hydroxy-4-methylpentanoate (2-isopropylmalate). This chain is Putative 2-isopropylmalate synthase, found in Buchnera aphidicola subsp. Baizongia pistaciae (strain Bp).